The sequence spans 592 residues: Ichor (592 aa).

A compositionally biased stretch (polar residues) spans 114–123; it reads NNNYMQSAYH. Disordered stretches follow at residues 114–156, 343–377, 416–439, and 459–527; these read NNNY…VSSS, LQNR…QAPT, LSNP…MQAS, and HTTT…DLSG. Low complexity predominate over residues 124 to 148; sequence PQNQSNPTSTTQSNGGSNSNSNNSN. Positions 356–369 are enriched in gly residues; sequence SSGGGGGANQGAGI. Residues 459–469 are compositionally biased toward polar residues; it reads HTTTASTTGSE. A compositionally biased stretch (low complexity) spans 488 to 500; the sequence is QQQQQQQQQQQQQ. Positions 507-524 are enriched in polar residues; it reads PTTPQMSAISPSGFSASD. C2H2-type zinc fingers lie at residues 536 to 558 and 564 to 586; these read HRCS…LRTH and FRCD…QQIH.

It localises to the nucleus. Its function is as follows. Transcriptional activator. In tracheal terminal cells, regulates the transcription of factors involved in the formation of a mature apical extracellular matrix (aECM) which is essential for the integrity and shape of seamless tubes. The sequence is that of Ichor from Drosophila melanogaster (Fruit fly).